A 346-amino-acid chain; its full sequence is MIKAGIIGATGYTGAELVRILSRHPEVELVALTSRSYAGEGMAGVYPSLTGYTNLTCENLTPDEVMDRAEVIFIALPHGHAVPVATRARERGIKVIDLGADWRFRNARTYEEWYKIQHGNHELAARAVYGLPEIHREAIRSAGLVANPGCYPTSAILGLAPLLKGGYIDPATIIIDAKSGVSGAGREARVTSLFVECNESINPYGVASHRHTPEIEQELSALAGKEVKVTFTPHLLPISRGILSTMYATLVRPASTEELRRVYEKFYAGEPFVHLLPPGQWPHTRWVYGSNNCHLNLAVDTRTGRVVVASAIDNLTKGASGQAVQNLNLMCGFPETMALEVPGLCP.

Cysteine 150 is a catalytic residue.

This sequence belongs to the NAGSA dehydrogenase family. Type 1 subfamily.

The protein resides in the cytoplasm. The enzyme catalyses N-acetyl-L-glutamate 5-semialdehyde + phosphate + NADP(+) = N-acetyl-L-glutamyl 5-phosphate + NADPH + H(+). Its pathway is amino-acid biosynthesis; L-arginine biosynthesis; N(2)-acetyl-L-ornithine from L-glutamate: step 3/4. Functionally, catalyzes the NADPH-dependent reduction of N-acetyl-5-glutamyl phosphate to yield N-acetyl-L-glutamate 5-semialdehyde. The sequence is that of N-acetyl-gamma-glutamyl-phosphate reductase from Moorella thermoacetica (strain ATCC 39073 / JCM 9320).